Consider the following 367-residue polypeptide: Molybdopterin synthase catalytic subunit (367 aa).

Substrate is bound by residues 101–102 (HR), Lys-117, and 124–126 (KKE). The segment at 325-350 (RHFTKREPSSMEAAPPKKSRKKSYSA) is disordered.

Belongs to the MoaE family. MOCS2B subfamily. As to quaternary structure, heterotetramer; composed of 2 small (Mocs2A) and 2 large (Mocs2B) subunits. Component of the Ada2a-containing (ATAC) complex composed of at least Ada2a, Atac1, Hcf, Ada3, Gcn5, Mocs2B, Charac-14, Atac3, Atac2, NC2beta and wds.

The protein localises to the cytoplasm. The protein resides in the nucleus. It carries out the reaction 2 [molybdopterin-synthase sulfur-carrier protein]-C-terminal-Gly-aminoethanethioate + cyclic pyranopterin phosphate + H2O = molybdopterin + 2 [molybdopterin-synthase sulfur-carrier protein]-C-terminal Gly-Gly + 2 H(+). The protein operates within cofactor biosynthesis; molybdopterin biosynthesis. Functionally, catalytic subunit of the molybdopterin synthase complex, a complex that catalyzes the conversion of precursor Z into molybdopterin. Acts by mediating the incorporation of 2 sulfur atoms from thiocarboxylated Mocs2A into precursor Z to generate a dithiolene group. Involved during biosynthesis of the molybdenum cofactor. This is Molybdopterin synthase catalytic subunit from Drosophila melanogaster (Fruit fly).